An 89-amino-acid polypeptide reads, in one-letter code: Co-chaperonin GroES (89 aa).

It belongs to the GroES chaperonin family. Heptamer of 7 subunits arranged in a ring. Interacts with the chaperonin GroEL.

The protein resides in the cytoplasm. Together with the chaperonin GroEL, plays an essential role in assisting protein folding. The GroEL-GroES system forms a nano-cage that allows encapsulation of the non-native substrate proteins and provides a physical environment optimized to promote and accelerate protein folding. GroES binds to the apical surface of the GroEL ring, thereby capping the opening of the GroEL channel. This chain is Co-chaperonin GroES, found in Porphyromonas gingivalis (strain ATCC 33277 / DSM 20709 / CIP 103683 / JCM 12257 / NCTC 11834 / 2561).